Here is a 201-residue protein sequence, read N- to C-terminus: Recombination protein RecR (201 aa).

A C4-type zinc finger spans residues 60–75 (CATCGNFDTVQPCAVC). Positions 83 to 178 (GIICVVEDVP…DVTRLAHGVP (96 aa)) constitute a Toprim domain.

The protein belongs to the RecR family.

May play a role in DNA repair. It seems to be involved in an RecBC-independent recombinational process of DNA repair. It may act with RecF and RecO. The chain is Recombination protein RecR from Hyphomonas neptunium (strain ATCC 15444).